Here is a 452-residue protein sequence, read N- to C-terminus: tRNA modification GTPase MnmE (452 aa).

Positions 24, 81, and 120 each coordinate (6S)-5-formyl-5,6,7,8-tetrahydrofolate. A TrmE-type G domain is found at 217–373; the sequence is GIKTAIVGKT…LIMKIEQMHI (157 aa). Asn-227 provides a ligand contact to K(+). GTP-binding positions include 227–232, 246–252, and 271–274; these read NVGKSS, TDIHGTT, and DTAG. Ser-231 contacts Mg(2+). Thr-246, Ile-248, and Thr-251 together coordinate K(+). A Mg(2+)-binding site is contributed by Thr-252. Position 452 (Lys-452) interacts with (6S)-5-formyl-5,6,7,8-tetrahydrofolate.

The protein belongs to the TRAFAC class TrmE-Era-EngA-EngB-Septin-like GTPase superfamily. TrmE GTPase family. As to quaternary structure, homodimer. Heterotetramer of two MnmE and two MnmG subunits. K(+) serves as cofactor.

The protein localises to the cytoplasm. In terms of biological role, exhibits a very high intrinsic GTPase hydrolysis rate. Involved in the addition of a carboxymethylaminomethyl (cmnm) group at the wobble position (U34) of certain tRNAs, forming tRNA-cmnm(5)s(2)U34. In Mesoplasma florum (strain ATCC 33453 / NBRC 100688 / NCTC 11704 / L1) (Acholeplasma florum), this protein is tRNA modification GTPase MnmE.